The following is a 181-amino-acid chain: Adenylate kinase (181 aa).

10–15 contributes to the ATP binding site; sequence GAGKGT. Residues 30–59 are NMP; sequence STGDLFRSNISEGTELGLQAKQYLDAGDLV. AMP is bound by residues Thr-31, Arg-36, 57-59, 85-88, and Gln-92; these read DLV and GFPR. The tract at residues 126 to 132 is LID; the sequence is GRGRADD. Arg-127 is a binding site for ATP. Residues Arg-129 and Arg-140 each contribute to the AMP site. Gly-166 serves as a coordination point for ATP.

This sequence belongs to the adenylate kinase family. As to quaternary structure, monomer.

The protein resides in the cytoplasm. It catalyses the reaction AMP + ATP = 2 ADP. It participates in purine metabolism; AMP biosynthesis via salvage pathway; AMP from ADP: step 1/1. Catalyzes the reversible transfer of the terminal phosphate group between ATP and AMP. Plays an important role in cellular energy homeostasis and in adenine nucleotide metabolism. This is Adenylate kinase from Mycobacteroides abscessus (strain ATCC 19977 / DSM 44196 / CCUG 20993 / CIP 104536 / JCM 13569 / NCTC 13031 / TMC 1543 / L948) (Mycobacterium abscessus).